Here is an 81-residue protein sequence, read N- to C-terminus: uncharacterized protein (81 aa).

It to Synechocystis PCC 6803 ssr2439.

May have a regulatory function. This is an uncharacterized protein from Synechococcus elongatus (strain ATCC 33912 / PCC 7942 / FACHB-805) (Anacystis nidulans R2).